The chain runs to 369 residues: Molybdenum import ATP-binding protein ModC (369 aa).

The region spanning 3 to 246 (TRPEQASKDT…LDLPLAHGDS (244 aa)) is the ABC transporter domain. Residue 44 to 51 (GPSGSGKT) coordinates ATP. The Mop domain occupies 305–369 (DTSILNILPA…AQIKGVAILG (65 aa)).

This sequence belongs to the ABC transporter superfamily. Molybdate importer (TC 3.A.1.8) family. The complex is composed of two ATP-binding proteins (ModC), two transmembrane proteins (ModB) and a solute-binding protein (ModA).

It localises to the cell inner membrane. The enzyme catalyses molybdate(out) + ATP + H2O = molybdate(in) + ADP + phosphate + H(+). Part of the ABC transporter complex ModABC involved in molybdenum import. Responsible for energy coupling to the transport system. In Albidiferax ferrireducens (strain ATCC BAA-621 / DSM 15236 / T118) (Rhodoferax ferrireducens), this protein is Molybdenum import ATP-binding protein ModC.